Reading from the N-terminus, the 1158-residue chain is Hephaestin (1158 aa).

The first 23 residues, Met1 to Gly23, serve as a signal peptide directing secretion. Plastocyanin-like domains follow at residues Ala24–Cys206, Gln218–Cys366, Pro370–Cys560, Lys570–Cys718, Ala731–Cys903, and His911–Glu1067. Residues Ala24–Ser1110 lie on the Extracellular side of the membrane. 2 residues coordinate Na(+): Gly70 and Tyr73. 2 residues coordinate Cu(2+): His126 and His128. His126 serves as a coordination point for O2. Ca(2+) is bound by residues Lys134, Asp152, and Asp153. N-linked (GlcNAc...) asparagine glycosylation is present at Asn164. An intrachain disulfide couples Cys180 to Cys206. Residues His186 and His188 each coordinate Cu(2+). His186 lines the O2 pocket. A glycan (N-linked (GlcNAc...) asparagine) is linked at Asn236. Residue Ser265 coordinates Na(+). A disulfide bridge links Cys285 with Cys366. The Cu(2+) site is built by His304, Cys347, and His352. The Na(+) site is built by Phe416, Gly425, and Tyr428. A disulfide bridge connects residues Cys534 and Cys560. Asn588 carries N-linked (GlcNAc...) asparagine glycosylation. Ser617 contacts Na(+). A disulfide bond links Cys637 and Cys718. Cu(2+)-binding residues include His656, Cys699, His704, and Met709. N-linked (GlcNAc...) asparagine glycosylation is found at Asn714 and Asn758. Na(+) is bound by residues Phe769 and Gly778. N-linked (GlcNAc...) asparagine glycosylation is found at Asn829 and Asn873. An intrachain disulfide couples Cys877 to Cys903. Asn931 is a glycosylation site (N-linked (GlcNAc...) asparagine). His1000, His1003, His1005, His1045, Cys1046, His1047, His1051, and Met1056 together coordinate Cu(2+). O2 contacts are provided by His1003 and His1005. His1047 contributes to the O2 binding site. A helical transmembrane segment spans residues Val1111–Trp1131. The Cytoplasmic segment spans residues Tyr1132–Gln1158. Phosphoserine occurs at positions 1145, 1150, and 1155.

The protein belongs to the multicopper oxidase family. Part of a complex composed of SLC40A1/ferroportin, TF/transferrin and HEPH/hephaestin that transfers iron from cells to transferrin. Cu cation serves as cofactor. As to expression, expressed by intestinal absorptive cells (at protein level). Also detected in breast, colon, bone trabecular cells and fibroblasts.

The protein resides in the basolateral cell membrane. It carries out the reaction 4 Fe(2+) + O2 + 4 H(+) = 4 Fe(3+) + 2 H2O. Its function is as follows. Plasma membrane ferroxidase that mediates the extracellular conversion of ferrous/Fe(2+) iron into its ferric/Fe(3+) form. Couples ferroportin which specifically exports ferrous/Fe(2+) iron from cells to transferrin that only binds and shuttles extracellular ferric/Fe(3+) iron throughout the body. By helping iron transfer from cells to blood mainly contributes to dietary iron absorption by the intestinal epithelium and more generally regulates iron levels in the body. This Homo sapiens (Human) protein is Hephaestin.